An 81-amino-acid chain; its full sequence is Sulfur carrier protein TusA (81 aa).

The active-site Cysteine persulfide intermediate is C19.

This sequence belongs to the sulfur carrier protein TusA family.

It is found in the cytoplasm. Its function is as follows. Sulfur carrier protein which probably makes part of a sulfur-relay system. The polypeptide is Sulfur carrier protein TusA (Shewanella woodyi (strain ATCC 51908 / MS32)).